A 38-amino-acid chain; its full sequence is Cytochrome b6-f complex subunit 5 (38 aa).

The chain crosses the membrane as a helical span at residues 5-25 (LLLGIVLGLIPITLAGLFVAA).

Belongs to the PetG family. The 4 large subunits of the cytochrome b6-f complex are cytochrome b6, subunit IV (17 kDa polypeptide, PetD), cytochrome f and the Rieske protein, while the 4 small subunits are PetG, PetL, PetM and PetN. The complex functions as a dimer.

The protein localises to the cellular thylakoid membrane. In terms of biological role, component of the cytochrome b6-f complex, which mediates electron transfer between photosystem II (PSII) and photosystem I (PSI), cyclic electron flow around PSI, and state transitions. PetG is required for either the stability or assembly of the cytochrome b6-f complex. In Crocosphaera subtropica (strain ATCC 51142 / BH68) (Cyanothece sp. (strain ATCC 51142)), this protein is Cytochrome b6-f complex subunit 5.